The chain runs to 597 residues: UvrABC system protein C (597 aa).

Positions Lys14 to Leu91 constitute a GIY-YIG domain.

It belongs to the UvrC family. In terms of assembly, interacts with UvrB in an incision complex.

Its subcellular location is the cytoplasm. In terms of biological role, the UvrABC repair system catalyzes the recognition and processing of DNA lesions. UvrC both incises the 5' and 3' sides of the lesion. The N-terminal half is responsible for the 3' incision and the C-terminal half is responsible for the 5' incision. The sequence is that of UvrABC system protein C from Mycoplasma genitalium (strain ATCC 33530 / DSM 19775 / NCTC 10195 / G37) (Mycoplasmoides genitalium).